A 544-amino-acid polypeptide reads, in one-letter code: Coiled-coil domain-containing protein 82 (544 aa).

A compositionally biased stretch (basic residues) spans 1-14 (MIHVRRHETRRNSK). A disordered region spans residues 1–294 (MIHVRRHETR…ESDEDGDDYI (294 aa)). Residues 16-27 (HVPEQKSRVDWR) show a composition bias toward basic and acidic residues. Positions 39–67 (DSDEELDSEEFDSDEELDSDESFENDEEL) are enriched in acidic residues. Serine 88, serine 131, serine 154, serine 195, and serine 219 each carry phosphoserine. The span at 88–108 (SKIQSEGNDSKCLINSGNGST) shows a compositional bias: polar residues. Basic and acidic residues predominate over residues 112–132 (ETNKIKHRNIDLQDQEKHLSQ). Positions 223 to 248 (MEQKTPEKTLAAQKREKLQKLKELSK) are enriched in basic and acidic residues. Threonine 227 carries the post-translational modification Phosphothreonine. Residues 229 to 256 (EKTLAAQKREKLQKLKELSKQRSRQRRS) are a coiled coil. A compositionally biased stretch (acidic residues) spans 273 to 294 (DEVDEEEEEDNYESDEDGDDYI). Residue serine 329 is modified to Phosphoserine.

This chain is Coiled-coil domain-containing protein 82 (CCDC82), found in Homo sapiens (Human).